The chain runs to 222 residues: Kinetochore protein Spc25 (222 aa).

Residues Arg-51 to Gln-100 are a coiled coil.

It belongs to the SPC25 family. In terms of assembly, component of the Ndc80 complex, which is composed of Ndc80, Nuf2 and Spc25.

It localises to the nucleus. Its subcellular location is the chromosome. The protein resides in the centromere. It is found in the kinetochore. Its function is as follows. Acts as a component of the essential kinetochore-associated Ndc80 complex, which is required for chromosome segregation and spindle checkpoint activity during meiosis and mitosis. Required for kinetochore integrity and the organization of stable microtubule binding sites in the outer plate of the kinetochore. Participates in SAC signaling that responds specifically to disruptions in spindle microtubule dynamics. The NDC80 complex synergistically enhances the affinity of the SKA1 complex for microtubules and may allow the NDC80 complex to track depolymerizing microtubules. This chain is Kinetochore protein Spc25, found in Drosophila sechellia (Fruit fly).